A 381-amino-acid polypeptide reads, in one-letter code: L-lactate dehydrogenase (381 aa).

The FMN hydroxy acid dehydrogenase domain maps to 1 to 380 (MIISASTDYR…TRDSLVRELG (380 aa)). Tyr24 contacts substrate. FMN contacts are provided by Ser106 and Gln127. Position 129 (Tyr129) interacts with substrate. Thr155 contacts FMN. Arg164 is a substrate binding site. Lys251 contributes to the FMN binding site. The active-site Proton acceptor is the His275. Arg278 serves as a coordination point for substrate. 306-330 (DSGIRSGLDVVRMIALGADTVLIGR) provides a ligand contact to FMN.

Belongs to the FMN-dependent alpha-hydroxy acid dehydrogenase family. As to quaternary structure, homotetramer. Requires FMN as cofactor.

The protein localises to the cell inner membrane. The enzyme catalyses (S)-lactate + A = pyruvate + AH2. Catalyzes the conversion of L-lactate to pyruvate. Is coupled to the respiratory chain. The chain is L-lactate dehydrogenase from Pseudomonas putida (strain GB-1).